A 370-amino-acid chain; its full sequence is 3-dehydroquinate synthase (370 aa).

NAD(+) is bound by residues Gly107–Asp111, Thr131–Ser132, Lys144, and Lys153. Glu186, His249, and His267 together coordinate Zn(2+).

The protein belongs to the sugar phosphate cyclases superfamily. Dehydroquinate synthase family. Co(2+) is required as a cofactor. It depends on Zn(2+) as a cofactor. Requires NAD(+) as cofactor.

It localises to the cytoplasm. It carries out the reaction 7-phospho-2-dehydro-3-deoxy-D-arabino-heptonate = 3-dehydroquinate + phosphate. Its pathway is metabolic intermediate biosynthesis; chorismate biosynthesis; chorismate from D-erythrose 4-phosphate and phosphoenolpyruvate: step 2/7. Functionally, catalyzes the conversion of 3-deoxy-D-arabino-heptulosonate 7-phosphate (DAHP) to dehydroquinate (DHQ). The polypeptide is 3-dehydroquinate synthase (Ruegeria pomeroyi (strain ATCC 700808 / DSM 15171 / DSS-3) (Silicibacter pomeroyi)).